The sequence spans 157 residues: Cyclic pyranopterin monophosphate synthase (157 aa).

Residues 74–76 (MCH) and 112–113 (ME) each bind substrate. Residue aspartate 127 is part of the active site.

This sequence belongs to the MoaC family. As to quaternary structure, homohexamer; trimer of dimers.

It catalyses the reaction (8S)-3',8-cyclo-7,8-dihydroguanosine 5'-triphosphate = cyclic pyranopterin phosphate + diphosphate. The protein operates within cofactor biosynthesis; molybdopterin biosynthesis. Its function is as follows. Catalyzes the conversion of (8S)-3',8-cyclo-7,8-dihydroguanosine 5'-triphosphate to cyclic pyranopterin monophosphate (cPMP). The polypeptide is Cyclic pyranopterin monophosphate synthase (Campylobacter jejuni subsp. jejuni serotype O:2 (strain ATCC 700819 / NCTC 11168)).